Consider the following 505-residue polypeptide: Sodium-coupled neutral amino acid transporter 3 (505 aa).

The tract at residues 27–48 (VPTTDTQRTEDTQHCGEGKGFL) is disordered. Residues 33-43 (QRTEDTQHCGE) show a composition bias toward basic and acidic residues. The N-linked (GlcNAc...) asparagine glycan is linked to N73. 5 helical membrane passes run 82–102 (GILGLAYAMANTGIILFLFLL), 105–125 (VALLSSYSIHLLLKSSGIVGI), 143–163 (AAALAITLQNIGAMSSYLYII), 186–206 (MDGNYLVILVSVTIILPLALM), and 212–232 (LGYSSGFSLSCMVFFLIAVIY). C239 and C276 are disulfide-bonded. 2 N-linked (GlcNAc...) asparagine glycosylation sites follow: N247 and N251. A helical membrane pass occupies residues 288-308 (AYTIPIMAFAFVCHPEVLPIY). Residue N324 is glycosylated (N-linked (GlcNAc...) asparagine). Transmembrane regions (helical) follow at residues 325-345 (LSIAVMYVMYFLAALFGYLTF), 367-387 (ILCVRVAVLIAVTLTVPIVLF), 409-429 (VLIATGLLTCINLLVIFAPNI), 432-452 (IFGIIGATSAPCLIFIFPAIF), and 472-492 (ALCFAAVGFLLMTMSLSFIII).

It belongs to the amino acid/polyamine transporter 2 family. As to expression, expressed predominantly in liver, moderately expressed in kidney and brain, and barely detectable in heart and muscle. Within liver, expressed in hepatocytes. Not detected in testis. Expressed in cells of the ganglion cell layer, in soma of some cells of the inner nuclear layer (at protein level). Expressed in the inner segments of photoreceptor cells.

Its subcellular location is the cell membrane. The protein localises to the basolateral cell membrane. The catalysed reaction is L-histidine(out) + Na(+)(out) + H(+)(in) = L-histidine(in) + Na(+)(in) + H(+)(out). The enzyme catalyses L-glutamine(out) + Na(+)(out) + H(+)(in) = L-glutamine(in) + Na(+)(in) + H(+)(out). It catalyses the reaction L-asparagine(out) + Na(+)(out) + H(+)(in) = L-asparagine(in) + Na(+)(in) + H(+)(out). In terms of biological role, symporter that cotransports specific neutral amino acids and sodium ions, coupled to an H(+) antiporter activity. Mainly participates in the glutamate-GABA-glutamine cycle in brain where it transports L-glutamine from astrocytes in the intercellular space for the replenishment of both neurotransmitters glutamate and gamma-aminobutyric acid (GABA) in neurons and also functions as the major influx transporter in ganglion cells mediating the uptake of glutamine. The transport activity is specific for L-glutamine, L-histidine and L-asparagine. The transport is electroneutral coupled to the cotransport of 1 Na(+) and the antiport of 1 H(+). The transport is pH dependent, saturable, Li(+) tolerant and functions in both direction depending on the concentration gradients of its substrates and cotransported ions. Also mediates an amino acid-gated H(+) conductance that is not stoichiometrically coupled to the amino acid transport but which influences the ionic gradients that drive the amino acid transport. In addition, may play a role in nitrogen metabolism, amino acid homeostasis, glucose metabolism and renal ammoniagenesis. This is Sodium-coupled neutral amino acid transporter 3 from Mus musculus (Mouse).